The chain runs to 293 residues: Group 3 late-embryogenesis abundant protein, mitochondrial (293 aa).

The transit peptide at 1-31 (MFLARNAGRAGYRGVVAYQQAASFSVSSAKA) directs the protein to the mitochondrion. The segment covering 27 to 43 (SSAKAAGSRSSGGSDAG) has biased composition (low complexity). A disordered region spans residues 27-52 (SSAKAAGSRSSGGSDAGDYAREAAEH). LEA 11-mer repeat repeat units lie at residues 58–68 (KDLKNEASWKA), 83–93 (KDTVKEGVHDM), 123–133 (KNAAQDTAATL), 134–144 (KDKAGSAWNQA), 145–155 (KHVVEDKGEDV), 160–170 (KDTASKVWGKA), 171–181 (KHVAEDVKENA), 199–209 (KDKAADVLSGA), and 210–220 (KHTAENLAHKA). The interval 217–293 (AHKAQAAIHD…KGPGQAGGRR (77 aa)) is disordered. Low complexity predominate over residues 230–265 (SSGSQSQSQSQSQYRQGQQQGRQDQQQSKSQWGQTS). Residues 279–293 (GPQGGKGPGQAGGRR) are compositionally biased toward gly residues.

Belongs to the LEA type 4 family.

It localises to the mitochondrion. Mitochondrial heat soluble protein acting as a molecular shield in water-deficient condition. The sequence is that of Group 3 late-embryogenesis abundant protein, mitochondrial from Ramazzottius varieornatus (Water bear).